The chain runs to 61 residues: Large ribosomal subunit protein uL30 (61 aa).

The protein belongs to the universal ribosomal protein uL30 family. In terms of assembly, part of the 50S ribosomal subunit.

The chain is Large ribosomal subunit protein uL30 from Bordetella petrii (strain ATCC BAA-461 / DSM 12804 / CCUG 43448).